A 201-amino-acid polypeptide reads, in one-letter code: uncharacterized protein (201 aa).

This is an uncharacterized protein from Acanthamoeba polyphaga mimivirus (APMV).